Consider the following 304-residue polypeptide: Quinolinate synthase (304 aa).

Residues His-23 and Ser-40 each contribute to the iminosuccinate site. Cys-85 contacts [4Fe-4S] cluster. Iminosuccinate contacts are provided by residues 111 to 113 (YIN) and Ser-128. Position 171 (Cys-171) interacts with [4Fe-4S] cluster. Iminosuccinate-binding positions include 197-199 (HPE) and Thr-214. A [4Fe-4S] cluster-binding site is contributed by Cys-259.

This sequence belongs to the quinolinate synthase family. Type 2 subfamily. Requires [4Fe-4S] cluster as cofactor.

It is found in the cytoplasm. The enzyme catalyses iminosuccinate + dihydroxyacetone phosphate = quinolinate + phosphate + 2 H2O + H(+). Its pathway is cofactor biosynthesis; NAD(+) biosynthesis; quinolinate from iminoaspartate: step 1/1. Functionally, catalyzes the condensation of iminoaspartate with dihydroxyacetone phosphate to form quinolinate. The sequence is that of Quinolinate synthase from Clostridioides difficile (strain 630) (Peptoclostridium difficile).